A 294-amino-acid polypeptide reads, in one-letter code: Bifunctional protein FolD (294 aa).

Residues 176–178 (GAS), Ser-201, and Ile-242 contribute to the NADP(+) site.

Belongs to the tetrahydrofolate dehydrogenase/cyclohydrolase family. Homodimer.

It carries out the reaction (6R)-5,10-methylene-5,6,7,8-tetrahydrofolate + NADP(+) = (6R)-5,10-methenyltetrahydrofolate + NADPH. It catalyses the reaction (6R)-5,10-methenyltetrahydrofolate + H2O = (6R)-10-formyltetrahydrofolate + H(+). It participates in one-carbon metabolism; tetrahydrofolate interconversion. Catalyzes the oxidation of 5,10-methylenetetrahydrofolate to 5,10-methenyltetrahydrofolate and then the hydrolysis of 5,10-methenyltetrahydrofolate to 10-formyltetrahydrofolate. The polypeptide is Bifunctional protein FolD (Bordetella petrii (strain ATCC BAA-461 / DSM 12804 / CCUG 43448)).